Here is a 1805-residue protein sequence, read N- to C-terminus: Cytadherence high molecular weight protein 2 (1805 aa).

4 coiled-coil regions span residues 28–838 (EKNR…NNAF), 914–1591 (ELKI…LRTQ), 1632–1723 (DNTL…QHNT), and 1777–1804 (NITK…KAAS).

Component of the cytoskeleton-like structure which stabilizes the shape of the wall-less Mycoplasma. This cytoskeleton-like network of accessory proteins containing HMW proteins 1 to 5 allows the proper anchoring of cytadhesin proteins in the mycoplasmal membrane at the attachment organelle. The sequence is that of Cytadherence high molecular weight protein 2 (hmw2) from Mycoplasma genitalium (strain ATCC 33530 / DSM 19775 / NCTC 10195 / G37) (Mycoplasmoides genitalium).